A 316-amino-acid polypeptide reads, in one-letter code: Probable thioesterase lcsE (316 aa).

It belongs to the AMT4 thioesterase family.

It functions in the pathway secondary metabolite biosynthesis. In terms of biological role, probable thioesterase; part of the gene cluster that mediates the biosynthesis of the lipopeptide antibiotics leucinostatins that show extensive biological activities, including antimalarial, antiviral, antibacterial, antifungal, and antitumor activities, as well as phytotoxic. Leucinostatin A contains nine amino acid residues, including the unusual amino acid 4-methyl-L-proline (MePro), 2-amino-6-hydroxy-4-methyl-8-oxodecanoic acid (AHyMeOA), 3-hydroxyleucine (HyLeu), alpha-aminoisobutyric acid (AIB), beta-Ala, a 4-methylhex-2-enoic acid at the N-terminus as well as a N1,N1-dimethylpropane-1,2-diamine (DPD) at the C-terminus. The biosynthesis of leucinostatins is probably initiated with the assembly of 4-methylhex-2-enoic acid by a reducing PKS. Two reducing polyketide synthases, lcsB and lcsC, have been identified in the cluster and it is not clear which is the one that assembles 4-methylhex-2-enoic acid since both contain KS, AT, DH, cMT, ER, KR and ACP domains. The polyketide residue might be transferred to the NRPS lcsA, mediated by two additional enzymes, the acyl-CoA ligase lcsD and the thioesterase lcsE. The linear polyketide carboxylic acid, which is released from PKS, is converted to a CoA thioester by lcsD, and then lcsE hydrolyzes the thiol bond and shuttles the polyketide intermediate to lcsA. The C domain of the first module catalyzed the condensation of 4-methylhex-2-enoic acid and MePro carried by domain A1, followed by successive condensations of nine amino acids to trigger the elongation of the linear peptide. A5 and A6 domains of lcsA are proposed to incorporate leucine, A2 AHyMeOA, and A3 incorporates HyLeu. A4, A7 and A8 incorporate AIB. The AHyMeOA in leucinostatin A activated by the A2 might be produced by the second PKS (lcsB or lcsC) present within the cluster. The MePro is probably produced via leucine cyclization and may originate from a separate pathway, independent of the cluster. Another nonproteinogenic amino acid, beta-Ala, could be produced by an aspartic acid decarboxylase also localized outside of the cluster. Two candidates are VFPBJ_01400 and VFPBJ_10476. The final peptide scaffold may be released by the NAD(P)H-dependent thioester reductase (TE) at the C-terminal region of lcsA. Transamination of the lcsA product by the transaminase lcsP may produce DPD at the C-terminus. Further hydroxylation steps performed alternatively by the cytochrome P450 monooxygenases lcsI, lcsK and lcsN then yield the non-methylated leucinostatins precursor. It is also possible that leucines can be hydroxylated prior to their incorporation into the peptide. Varying extents of methylation then lead to the formation of leucinostatins A and B. This chain is Probable thioesterase lcsE, found in Purpureocillium lilacinum (Paecilomyces lilacinus).